Consider the following 209-residue polypeptide: Outer-membrane lipoprotein LolB (209 aa).

An N-terminal signal peptide occupies residues 1 to 17 (MATVFSRALGALVLGVA). Cysteine 18 is lipidated: N-palmitoyl cysteine. A lipid anchor (S-diacylglycerol cysteine) is attached at cysteine 18.

The protein belongs to the LolB family. As to quaternary structure, monomer.

The protein localises to the cell outer membrane. In terms of biological role, plays a critical role in the incorporation of lipoproteins in the outer membrane after they are released by the LolA protein. The chain is Outer-membrane lipoprotein LolB from Ralstonia nicotianae (strain ATCC BAA-1114 / GMI1000) (Ralstonia solanacearum).